The chain runs to 825 residues: MFSGFNVFRVGISFVIMCIFYMPTVNSLPELSPQKYFSTLQPGKASLAYFCQADSPRTSVFLEELNEAVRPLQDYGISVAKVNCVKEEISRYCGKEKDLMKAYLFKGNILLREFPTDTLFDVNAIVAHVLFALLFSEVKYITNLEDLQNIENALKGKANIIFSYVRAIGIPEHRAVMEAAFVYGTTYQFVLTTEIALLESIGSEDVEYAHLYFFHCKLVLDLTQQCRRTLMEQPLTTLNIHLFIKTMKAPLLTEVAEDPQQVSTVHLQLGLPLVFIVSQQATYEADRRTAEWVAWRLLGKAGVLLLLRDSLEVNIPQDANVVFKRAEEGVPVEFLVLHDVDLIISHVENNMHIEEIQEDEDNDMEGPDIDVQDDEVAETVFRDRKRKLPLELTVELTEETFNATVMASDSIVLFYAGWQAVSMAFLQSYIDVAVKLKGTSTMLLTRINCADWSDVCTKQNVTEFPIIKMYKKGENPVSYAGMLGTEDLLKFIQLNRISYPVNITSIQEAEEYLSGELYKDLILYSSVSVLGLFSPTMKTAKEDFSEAGNYLKGYVITGIYSEEDVLLLSTKYAASLPALLLARHTEGKIESIPLASTHAQDIVQIITDALLEMFPEITVENLPSYFRLQKPLLILFSDGTVNPQYKKAILTLVKQKYLDSFTPCWLNLKNTPVGRGILRAYFDPLPPLPLLVLVNLHSGGQVFAFPSDQAIIEENLVLWLKKLEAGLENHITILPAQEWKPPLPAYDFLSMIDAATSQRGTRKVPKCMKETDVQENDKEQHEDKSAVRKEPIETLRIKHWNRSNWFKEAEKSFRRDKELGCSKVN.

A signal peptide spans Met1 to Ser27. Residues Leu392 to Asn495 enclose the Thioredoxin domain. A disulfide bond links Cys449 and Cys456. N-linked (GlcNAc...) asparagine glycosylation occurs at Asn460. The interval Arg762 to Val787 is disordered. Over residues Cys767–Val787 the composition is skewed to basic and acidic residues. The Mediates endoplasmic reticulum retention motif lies at Asp816 to Leu819.

Interacts with FOXRED2. Glycosylated.

Its subcellular location is the secreted. It is found in the endoplasmic reticulum lumen. This chain is Thioredoxin domain-containing protein 16, found in Homo sapiens (Human).